The following is a 631-amino-acid chain: Chaperone protein DnaK (631 aa).

Threonine 197 bears the Phosphothreonine; by autocatalysis mark. Residues methionine 598–glutamate 631 form a disordered region. Residues aspartate 622 to glutamate 631 show a composition bias toward acidic residues.

This sequence belongs to the heat shock protein 70 family.

Its function is as follows. Acts as a chaperone. In Nitratiruptor sp. (strain SB155-2), this protein is Chaperone protein DnaK.